The following is a 377-amino-acid chain: Tryptophan--tRNA ligase, mitochondrial (377 aa).

ATP-binding positions include Gln21 and 28-31 (HLGN). Positions 22 to 31 (PTSSALHLGN) match the 'HIGH' region motif. Asp181 serves as a coordination point for L-tryptophan. Residues 193–195 (GED), 242–246 (KMSKS), and Lys245 contribute to the ATP site. Positions 242–246 (KMSKS) match the 'KMSKS' region motif.

This sequence belongs to the class-I aminoacyl-tRNA synthetase family.

The protein localises to the mitochondrion matrix. The catalysed reaction is tRNA(Trp) + L-tryptophan + ATP = L-tryptophyl-tRNA(Trp) + AMP + diphosphate + H(+). In Dictyostelium discoideum (Social amoeba), this protein is Tryptophan--tRNA ligase, mitochondrial (wars2).